Consider the following 338-residue polypeptide: Holliday junction branch migration complex subunit RuvB (338 aa).

Residues methionine 1 to tyrosine 179 form a large ATPase domain (RuvB-L) region. Leucine 18, arginine 19, glycine 60, lysine 63, threonine 64, threonine 65, arginine 169, tyrosine 179, and arginine 216 together coordinate ATP. Mg(2+) is bound at residue threonine 64. The segment at threonine 180 to glutamate 250 is small ATPAse domain (RuvB-S). A head domain (RuvB-H) region spans residues alanine 253–lysine 338. DNA is bound by residues arginine 289, arginine 308, and arginine 313.

Belongs to the RuvB family. In terms of assembly, homohexamer. Forms an RuvA(8)-RuvB(12)-Holliday junction (HJ) complex. HJ DNA is sandwiched between 2 RuvA tetramers; dsDNA enters through RuvA and exits via RuvB. An RuvB hexamer assembles on each DNA strand where it exits the tetramer. Each RuvB hexamer is contacted by two RuvA subunits (via domain III) on 2 adjacent RuvB subunits; this complex drives branch migration. In the full resolvosome a probable DNA-RuvA(4)-RuvB(12)-RuvC(2) complex forms which resolves the HJ.

It localises to the cytoplasm. It carries out the reaction ATP + H2O = ADP + phosphate + H(+). In terms of biological role, the RuvA-RuvB-RuvC complex processes Holliday junction (HJ) DNA during genetic recombination and DNA repair, while the RuvA-RuvB complex plays an important role in the rescue of blocked DNA replication forks via replication fork reversal (RFR). RuvA specifically binds to HJ cruciform DNA, conferring on it an open structure. The RuvB hexamer acts as an ATP-dependent pump, pulling dsDNA into and through the RuvAB complex. RuvB forms 2 homohexamers on either side of HJ DNA bound by 1 or 2 RuvA tetramers; 4 subunits per hexamer contact DNA at a time. Coordinated motions by a converter formed by DNA-disengaged RuvB subunits stimulates ATP hydrolysis and nucleotide exchange. Immobilization of the converter enables RuvB to convert the ATP-contained energy into a lever motion, pulling 2 nucleotides of DNA out of the RuvA tetramer per ATP hydrolyzed, thus driving DNA branch migration. The RuvB motors rotate together with the DNA substrate, which together with the progressing nucleotide cycle form the mechanistic basis for DNA recombination by continuous HJ branch migration. Branch migration allows RuvC to scan DNA until it finds its consensus sequence, where it cleaves and resolves cruciform DNA. The sequence is that of Holliday junction branch migration complex subunit RuvB from Sphingopyxis alaskensis (strain DSM 13593 / LMG 18877 / RB2256) (Sphingomonas alaskensis).